Reading from the N-terminus, the 583-residue chain is Ribonuclease ZC3H12A (583 aa).

Residues 1–11 (MSLWELEDRRS) are compositionally biased toward basic and acidic residues. 2 disordered regions span residues 1–29 (MSLW…EATT) and 73–119 (GSAA…GSDL). Positions 15–29 (TPRPAQEPTAEEATT) are enriched in low complexity. The segment at 26-71 (EATTAELQMKVDFFRKLGYSSAEIHSVLQKLGIQADTNTVLGELVK) is ubiquitin association domain. Positions 65-134 (VLGELVKHGS…DGSNVAMSHG (70 aa)) are necessary for interaction with TANK. Residues 73–82 (GSAAERERQA) show a composition bias toward basic and acidic residues. S83 is modified (phosphoserine). The segment at 96–281 (GGGTPKAPTV…LDNFLRKKPL (186 aa)) is RNase. One can recognise an RNase NYN domain in the interval 119–274 (LRPIVIDGSN…LGRHGPSLDN (156 aa)). Residues 198–204 (RRVGGKR) form an RNA binding region. D210 lines the Mg(2+) pocket. Disordered stretches follow at residues 262 to 290 (DDPL…KQPC) and 323 to 404 (ANAL…PSEW). The segment at 284 to 309 (EHKKQPCPYGRKCTYGIKCRFLHPER) adopts a C3H1-type zinc-finger fold. Positions 285–441 (HKKQPCPYGR…SELWGVRGGG (157 aa)) are necessary for interaction with ZC3H12D. The span at 341–352 (RPSPSSQPGSLP) shows a compositional bias: low complexity. The segment covering 353–364 (TEHEQCSPDRKK) has biased composition (basic and acidic residues). Low complexity predominate over residues 384-393 (PTGRSLPPSG). Phosphoserine occurs at positions 422 and 426. Residues 503 to 530 (YQLPPPTQRLQEPQAPGPGADRGPWGGA) form a disordered region.

The protein belongs to the ZC3H12 family. In terms of assembly, oligomer. Found in a deubiquitination complex with TANK, USP10 and ZC3H12A; this complex inhibits genotoxic stress- or interleukin-1-beta-mediated NF-kappaB activation by promoting IKBKG or TRAF6 deubiquitination. Interacts with IKBKG; this interaction increases in response to DNA damage. Interacts with TANK; this interaction increases in response to DNA damage and serves as a bridge to anchor both TANK and USP10 into a deubiquitinating complex. Interacts with TRAF6; this interaction increases in response to DNA damage and is stimulated by TANK. Interacts with USP10; this interaction increases in response to DNA damage and serves as a bridge to anchor both TANK and USP10 into a deubiquitinating complex. Interacts with ZC3H12D. Interacts with TNRC6A. Interacts with IKBKB/IKKB. Interacts with IKBKB/IKKB. Interacts with BTRC; the interaction occurs when ZC3H12A is phosphorylated in a IKBKB/IKKB-dependent manner. Interacts with IRAK1; this interaction increases the interaction between ZC3H12A and IKBKB/IKKB. Interacts with UPF1; this interaction occurs in a mRNA translationally active- and termination-dependent manner and is essential for ZC3H12A-mediated degradation of target mRNAs. Associates with ribosomes. Interacts with ubiquitin. It depends on Mg(2+) as a cofactor. In terms of processing, phosphorylated by IRAK1; phosphorylation is necessary for subsequent phosphorylation by the I-kappa-B-kinase (IKK) complex. Phosphorylated by I-kappa-B-kinase (IKK) subunits IKBKB/IKKB and CHUK/IKKA at Ser-422 and Ser-426; these phosphorylations promote ubiquitin proteasome-mediated degradation of ZC3H12A and hence facilitates rapid and robust production of IL-6 mRNA in response to toll-like receptor (TLR) or IL-1 receptor stimuli. Ubiquitinated; ubiquitination is induced in response to interleukin IL1 receptor stimuli in a IKBKB/IKKB and IRAK1-dependent manner, leading to proteasome-mediated degradation. Post-translationally, proteolytically cleaved between Arg-95 and Arg-198 by MALT1 in activated T-cells; cleavage at Arg-95 is critical for promoting ZC3H12A degradation in response to T-cell receptor (TCR) stimulation, and hence is necessary for prolonging the stability of a set of mRNAs controlling T-cell activation and Th17 cell differentiation.

The protein resides in the nucleus. It is found in the cytoplasm. The protein localises to the P-body. Its subcellular location is the rough endoplasmic reticulum membrane. It localises to the cytoplasmic granule. Functionally, endoribonuclease involved in various biological functions such as cellular inflammatory response and immune homeostasis, glial differentiation of neuroprogenitor cells, cell death of cardiomyocytes, adipogenesis and angiogenesis. Functions as an endoribonuclease involved in mRNA decay. Modulates the inflammatory response by promoting the degradation of a set of translationally active cytokine-induced inflammation-related mRNAs, such as IL6 and IL12B, during the early phase of inflammation. Prevents aberrant T-cell-mediated immune reaction by degradation of multiple mRNAs controlling T-cell activation, such as those encoding cytokines (IL6 and IL2), cell surface receptors (ICOS, TNFRSF4 and TNFR2) and transcription factor (REL). Inhibits cooperatively with ZC3H12A the differentiation of helper T cells Th17 in lungs. They repress target mRNA encoding the Th17 cell-promoting factors IL6, ICOS, REL, IRF4, NFKBID and NFKBIZ. The cooperation requires RNA-binding by RC3H1 and the nuclease activity of ZC3H12A. Together with RC3H1, destabilizes TNFRSF4/OX40 mRNA by binding to the conserved stem loop structure in its 3'UTR. Self regulates by destabilizing its own mRNA. Cleaves mRNA harboring a stem-loop (SL), often located in their 3'-UTRs, during the early phase of inflammation in a helicase UPF1-dependent manner. Plays a role in the inhibition of microRNAs (miRNAs) biogenesis. Cleaves the terminal loop of a set of precursor miRNAs (pre-miRNAs) important for the regulation of the inflammatory response leading to their degradation, and thus preventing the biosynthesis of mature miRNAs. Also plays a role in promoting angiogenesis in response to inflammatory cytokines by inhibiting the production of antiangiogenic microRNAs via its anti-dicer RNase activity. Affects the overall ubiquitination of cellular proteins. Positively regulates deubiquitinase activity promoting the cleavage at 'Lys-48'- and 'Lys-63'-linked polyubiquitin chains on TNF receptor-associated factors (TRAFs), preventing JNK and NF-kappa-B signaling pathway activation, and hence negatively regulating macrophage-mediated inflammatory response and immune homeostasis. Also induces deubiquitination of the transcription factor HIF1A, probably leading to its stabilization and nuclear import, thereby positively regulating the expression of proangiogenic HIF1A-targeted genes. Involved in a TANK-dependent negative feedback response to attenuate NF-kappaB activation through the deubiquitination of IKBKG or TRAF6 in response to interleukin-1-beta (IL1B) stimulation or upon DNA damage. Prevents stress granules (SGs) formation and promotes macrophage apoptosis under stress conditions, including arsenite-induced oxidative stress, heat shock, and energy deprivation. Plays a role in the regulation of macrophage polarization; promotes IL4-induced polarization of macrophages M1 into anti-inflammatory M2 state. May also act as a transcription factor that regulates the expression of multiple genes involved in inflammatory response, angiogenesis, adipogenesis and apoptosis. Functions as a positive regulator of glial differentiation of neuroprogenitor cells through an amyloid precursor protein (APP)-dependent signaling pathway. Attenuates septic myocardial contractile dysfunction in response to lipopolysaccharide (LPS) by reducing I-kappa-B-kinase (IKK)-mediated NF-kappa-B activation, and hence myocardial pro-inflammatory cytokine production. The sequence is that of Ribonuclease ZC3H12A from Bos taurus (Bovine).